A 78-amino-acid polypeptide reads, in one-letter code: High temperature lethal protein 1 (78 aa).

An N-acetylserine modification is found at S2.

In terms of assembly, interacts directly with RSC8. Component of the two forms of the RSC complex composed of at least either RSC1 or RSC2, and ARP7, ARP9, LDB7, NPL6, RSC3, RSC30, RSC4, RSC58, RSC6, RSC8, RSC9, SFH1, STH1, HTL1 and probably RTT102. The complexes interact with histone and histone variant components of centromeric chromatin. Component of a fungal-specific module (HTL1-LDB7-NPL6-RSC3-RSC30) within the RSC complex.

It localises to the nucleus. In terms of biological role, required for cell cycle progression through G2/M transition at temperatures higher than 33 degrees Celsius. Component of the chromatin structure-remodeling complex (RSC), which is involved in transcription regulation and nucleosome positioning. RSC is responsible for the transfer of a histone octamer from a nucleosome core particle to naked DNA. The reaction requires ATP and involves an activated RSC-nucleosome intermediate. Remodeling reaction also involves DNA translocation, DNA twist and conformational change. As a reconfigurer of centromeric and flanking nucleosomes, RSC complex is required both for proper kinetochore function in chromosome segregation and, via a PKC1-dependent signaling pathway, for organization of the cellular cytoskeleton. When associated with the RSC complex, may act coordinately with PKC1 to regulate G2/M transition. Together with LDB7, NPL6, RSC3, RSC30 components, defines a fungal-specific module within the RSC complex that plays a role in many cellular functions including the maintenance of cell wall integrity. The protein is High temperature lethal protein 1 (HTL1) of Saccharomyces cerevisiae (strain ATCC 204508 / S288c) (Baker's yeast).